A 345-amino-acid polypeptide reads, in one-letter code: Phosphoribosylformylglycinamidine cyclo-ligase (345 aa).

The protein belongs to the AIR synthase family.

The protein localises to the cytoplasm. It carries out the reaction 2-formamido-N(1)-(5-O-phospho-beta-D-ribosyl)acetamidine + ATP = 5-amino-1-(5-phospho-beta-D-ribosyl)imidazole + ADP + phosphate + H(+). The protein operates within purine metabolism; IMP biosynthesis via de novo pathway; 5-amino-1-(5-phospho-D-ribosyl)imidazole from N(2)-formyl-N(1)-(5-phospho-D-ribosyl)glycinamide: step 2/2. This Lactobacillus acidophilus (strain ATCC 700396 / NCK56 / N2 / NCFM) protein is Phosphoribosylformylglycinamidine cyclo-ligase.